A 294-amino-acid polypeptide reads, in one-letter code: uncharacterized protein (294 aa).

A run of 3 helical transmembrane segments spans residues 21–41 (AIVA…TFTF), 51–71 (PIIW…LWAA), and 77–97 (ILFS…VFLF). Residues 156 to 176 (HPVPFPAEPGSPDPVSPPPPI) are disordered. Residues 184–215 (ERAESLHAGNIELAEDLQRIQEMERNLENERS) adopt a coiled-coil conformation. The segment covering 265 to 277 (QQENESRLEERRF) has biased composition (basic and acidic residues). The tract at residues 265-294 (QQENESRLEERRFQSHSTNSLFEADSSRDN) is disordered.

It is found in the mitochondrion membrane. This is an uncharacterized protein from Arabidopsis thaliana (Mouse-ear cress).